A 266-amino-acid chain; its full sequence is Hemin import ATP-binding protein HmuV (266 aa).

The 237-residue stretch at 12–248 (LEASHLHYHV…ETLTQWYQAD (237 aa)) folds into the ABC transporter domain. 44–51 (GPNGAGKS) is a binding site for ATP.

This sequence belongs to the ABC transporter superfamily. Heme (hemin) importer (TC 3.A.1.14.5) family. As to quaternary structure, the complex is composed of two ATP-binding proteins (HmuV), two transmembrane proteins (HmuU) and a solute-binding protein (HmuT).

It localises to the cell inner membrane. In terms of biological role, part of the ABC transporter complex HmuTUV involved in hemin import. Responsible for energy coupling to the transport system. This is Hemin import ATP-binding protein HmuV from Yersinia pestis bv. Antiqua (strain Antiqua).